A 202-amino-acid chain; its full sequence is MVNYPHNLIRQKVSSVQKQTKQNKVDFANRGMSFEAAINATNDYYLSRQIAVIHKKPTPVQIVKVDYPKRSRAKIVEAYFRQASTTDYCGVYKGHYVDFEAKETRQKTAMPMKNFHLHQIEHMACVLHQKGICFVLLHFSTLKETYYLPAQALISFYQIDNGSKSMPIDYIRKNGFKVAFGAFPQVPYLNIIEQNFLGGDYN.

Residues T85, D87, E100, and Q119 each contribute to the Mg(2+) site.

The protein belongs to the RecU family. The cofactor is Mg(2+).

It localises to the cytoplasm. The catalysed reaction is Endonucleolytic cleavage at a junction such as a reciprocal single-stranded crossover between two homologous DNA duplexes (Holliday junction).. Endonuclease that resolves Holliday junction intermediates in genetic recombination. Cleaves mobile four-strand junctions by introducing symmetrical nicks in paired strands. Promotes annealing of linear ssDNA with homologous dsDNA. Required for DNA repair, homologous recombination and chromosome segregation. The protein is Holliday junction resolvase RecU of Streptococcus pyogenes serotype M6 (strain ATCC BAA-946 / MGAS10394).